Reading from the N-terminus, the 194-residue chain is Putative manganese efflux pump MntP (194 aa).

The next 6 membrane-spanning stretches (helical) occupy residues 3–23 (PFSI…AAIG), 37–57 (LRAG…GWLL), 69–89 (DHWI…VAGL), 110–132 (LGLA…SLAF), 147–167 (CTFS…NLIG), and 172–192 (MLGG…HLSG).

This sequence belongs to the MntP (TC 9.B.29) family.

The protein localises to the cell inner membrane. Functionally, probably functions as a manganese efflux pump. The polypeptide is Putative manganese efflux pump MntP (Xanthomonas euvesicatoria pv. vesicatoria (strain 85-10) (Xanthomonas campestris pv. vesicatoria)).